The following is a 777-amino-acid chain: Double zinc ribbon and ankyrin repeat-containing protein 1 (777 aa).

A compositionally biased stretch (basic and acidic residues) spans 161 to 176 (QVGERTDPKTLKDLRF). Positions 161-202 (QVGERTDPKTLKDLRFSESPLEIPAHSGGSGSRPPTRQSQSP) are disordered. Positions 193 to 202 (RPPTRQSQSP) are enriched in polar residues. Ser201 is modified (phosphoserine). DZANK-type zinc fingers lie at residues 230-289 (CAHC…CVVC) and 358-406 (CSRC…GSCG). 2 ANK repeats span residues 442-473 (NIPLPRSDAGTKRDIGTQTVGLFYPSGKLLAK) and 477-506 (EIASQKQRQEKMSDHKPLLTAISPGRGYWR).

Interacts with NINL. Associates with DYNC1H1 and multiple dynein intermediate and light chains as well as actin-binding proteins.

The protein localises to the cytoplasm. The protein resides in the cytoskeleton. It localises to the microtubule organizing center. Its subcellular location is the centrosome. It is found in the cilium basal body. Involved in vesicle transport in photoreceptor cells. The protein is Double zinc ribbon and ankyrin repeat-containing protein 1 (DZANK1) of Macaca fascicularis (Crab-eating macaque).